The sequence spans 511 residues: 2,3-bisphosphoglycerate-independent phosphoglycerate mutase (511 aa).

D12 is a Mn(2+) binding site. Y36 carries the post-translational modification Phosphotyrosine. S62 contacts Mn(2+). Catalysis depends on S62, which acts as the Phosphoserine intermediate. Residues H123, 153–154, R185, R191, 261–264, and K336 contribute to the substrate site; these read RD and RPDR. Residues D403, H407, D444, H445, and H462 each coordinate Mn(2+).

It belongs to the BPG-independent phosphoglycerate mutase family. Monomer. Requires Mn(2+) as cofactor.

It carries out the reaction (2R)-2-phosphoglycerate = (2R)-3-phosphoglycerate. It participates in carbohydrate degradation; glycolysis; pyruvate from D-glyceraldehyde 3-phosphate: step 3/5. Its function is as follows. Essential for rapid growth and for sporulation. Catalyzes the interconversion of 2-phosphoglycerate and 3-phosphoglycerate. The chain is 2,3-bisphosphoglycerate-independent phosphoglycerate mutase from Bacillus pumilus (strain SAFR-032).